The sequence spans 679 residues: Enzymatic polyprotein (679 aa).

Positions 40 to 130 (LHCFVDTGAS…LYEPFIQFTD (91 aa)) are protease. D45 is an active-site residue. The 181-residue stretch at 272 to 452 (LKVIKPSKSP…KKINFLGLEI (181 aa)) folds into the Reverse transcriptase domain.

It belongs to the caulimoviridae enzymatic polyprotein family.

It catalyses the reaction DNA(n) + a 2'-deoxyribonucleoside 5'-triphosphate = DNA(n+1) + diphosphate. Its function is as follows. Encodes for at least two polypeptides: protease (PR) and reverse transcriptase (RT). The protease processes the polyprotein in cis. Reverse transcriptase is multifunctional enzyme that converts the viral RNA genome into dsDNA in viral cytoplasmic capsids. This enzyme displays a DNA polymerase activity that can copy either DNA or RNA templates, and a ribonuclease H (RNase H) activity that cleaves the RNA strand of RNA-DNA heteroduplexes in a partially processive 3'- to 5'-endonucleasic mode. Neo-synthesized pregenomic RNA (pgRNA) are encapsidated, and reverse-transcribed inside the nucleocapsid. Partial (+)DNA is synthesized from the (-)DNA template and generates the relaxed circular DNA (RC-DNA) genome. After budding and infection, the RC-DNA migrates in the nucleus, and is converted into a plasmid-like covalently closed circular DNA (cccDNA). The chain is Enzymatic polyprotein from Cauliflower mosaic virus (strain CM-1841) (CaMV).